Here is a 3313-residue protein sequence, read N- to C-terminus: PHD finger protein rhinoceros (3313 aa).

Positions 1-16 (MSQRGKRGNQHHHQSH) are enriched in basic residues. Residues 1–136 (MSQRGKRGNQ…QGASTSSSWQ (136 aa)) are disordered. Composition is skewed to low complexity over residues 42 to 71 (PPNG…ATGG) and 100 to 134 (LGAA…TSSS). A PHD-type 1 zinc finger spans residues 323-373 (NVICDVCRSPDSEEANEMVFCDNCNICVHQACYGITAIPSGQWLCRTCSMG). The C2HC pre-PHD-type zinc finger occupies 375–409 (TPDCVLCPNKAGAMKSNKSGKHWAHVSCALWIPEV). A PHD-type 2; degenerate zinc finger spans residues 433–487 (LVCVLCRKRVGSCIQCSKHSMSKGKKENAGGASGGGSASVTSSMHKANKYATGTG). Disordered stretches follow at residues 453–526 (MSKG…ARAQ), 708–1076 (LQSG…TKAA), 1107–1842 (KEAK…PPSH), 1961–2033 (AQKE…TMGN), 2104–2136 (PVTA…RMQR), 2145–2164 (ARRS…PPAT), 2219–2252 (AAPQ…FNGG), 2353–2374 (PAYP…PAHP), 2398–2514 (VAAK…PPPM), 2563–2587 (TTRG…LHPV), 2647–2679 (ATGT…QPPA), 2827–2871 (SCGL…SSSR), 2888–2954 (LAGA…IKIR), 2978–2998 (YEMT…YSTP), 3017–3077 (DFDK…SATT), 3144–3233 (KAEK…SLPE), and 3259–3313 (YENS…CEVR). Residues 512 to 526 (KNDMTSEERNQARAQ) are compositionally biased toward basic and acidic residues. The segment covering 735–749 (KKLNNGAITSRTSSP) has biased composition (polar residues). Low complexity predominate over residues 760–772 (STSTSTATATTAA). Residues 792–802 (GAATGTSTHNK) are compositionally biased toward polar residues. 2 stretches are compositionally biased toward low complexity: residues 803–861 (TQSQ…ASGI) and 894–912 (EAAA…ATSS). Positions 919 to 934 (QQRRRQEPERERDGRG) are enriched in basic and acidic residues. Positions 942 to 955 (TVPNRTQPTKSKQS) are enriched in polar residues. Residues 956-972 (TQADAGSGAGTGAAVET) show a composition bias toward low complexity. Residues 994 to 1003 (ESLSSDESEE) are compositionally biased toward acidic residues. The segment covering 1015-1025 (AALSSGLAASG) has biased composition (low complexity). Polar residues predominate over residues 1058-1072 (VESNVSDSQNQQTIR). Basic and acidic residues-rich tracts occupy residues 1159–1168 (AADRMREPES) and 1178–1205 (KLKD…KEQS). The span at 1250 to 1266 (EAKSTAPAAKPTAAKTS) shows a compositional bias: low complexity. The segment covering 1285-1301 (LKSSKPLQDTTFSTANE) has biased composition (polar residues). Low complexity-rich tracts occupy residues 1308–1324 (AATT…GVAT), 1377–1404 (SSSS…SGSD), and 1451–1464 (PAAS…AAAT). Residues 1475–1485 (TARTRQNSTNK) are compositionally biased toward polar residues. Over residues 1551 to 1579 (SPEKQTARRKSRADESPKKIPNLEHEINQ) the composition is skewed to basic and acidic residues. Residues 1638 to 1650 (PVVEPEVETEIEP) show a composition bias toward acidic residues. Residues 1667–1678 (TAPTHTQLSANA) show a composition bias toward polar residues. Residues 1691–1702 (PAAPLPASPTPT) are compositionally biased toward pro residues. The span at 1722-1734 (SRWRSRRRRRRRS) shows a compositional bias: basic residues. Positions 1744–1773 (HTQHLLNEMEMARELEEERKNELLANASKY) form a coiled coil. A compositionally biased stretch (basic and acidic residues) spans 1753–1765 (EMARELEEERKNE). Polar residues-rich tracts occupy residues 1771-1781 (SKYSASTSSPA) and 1796-1805 (DSNSANSGGD). Positions 1806-1819 (QQQQQQQQPLPQQL) are enriched in low complexity. Polar residues predominate over residues 1823 to 1832 (SPSSEVASTI). Residues 1965–1984 (QQQQQQQQQQQQQQQQQQQQ) show a composition bias toward low complexity. Composition is skewed to polar residues over residues 1985–1999 (SCLY…SVAS) and 2007–2018 (MTANSGSYANSL). The segment covering 2019–2033 (TNTPNATPTNATMGN) has biased composition (low complexity). The segment covering 2106–2118 (TAQSGAGSNSNKL) has biased composition (polar residues). Composition is skewed to low complexity over residues 2148–2157 (SSSPSSVSES) and 2222–2242 (QQQT…QQQQ). Pro residues predominate over residues 2439–2451 (PVQPQPPTPPAPA). Over residues 2479-2488 (GSGGSGAPGR) the composition is skewed to gly residues. Low complexity predominate over residues 2658 to 2679 (PAVSAAPVAPAPAPAANSQPPA). Gly residues predominate over residues 2891-2900 (ASGGGAGTAS). A compositionally biased stretch (polar residues) spans 2909–2924 (CSSGSNNDNNGKTGAA). A compositionally biased stretch (basic and acidic residues) spans 2935–2946 (KTLESSEDDHQT). Basic and acidic residues predominate over residues 3017–3026 (DFDKGEENNK). Over residues 3046 to 3065 (KRPKSSKPKKDKKEKKRQKQ) the composition is skewed to basic residues. Over residues 3179–3198 (TSPQGLLLNSFTPHSQNANA) the composition is skewed to polar residues. Positions 3268 to 3290 (SASGTGSASSNSCNSNSNNNNNN) are enriched in low complexity. A compositionally biased stretch (gly residues) spans 3291–3302 (GSGGGAASGGGS).

The protein belongs to the JADE family.

The protein localises to the nucleus. Functionally, may function as a negative regulator of the EGFR/Ras/MAPK signaling pathway during eye development. The sequence is that of PHD finger protein rhinoceros (rno) from Drosophila pseudoobscura pseudoobscura (Fruit fly).